Consider the following 1080-residue polypeptide: MKLLYTDIQYNMIDILAGEAQLAAKAGKRVFYIAPNSLSFEKERAVLETLPERASFAITITRFEQMARYFVLNDIHQGETIDDNGLVMVFYRVLSSFSDQDLRVFGRLKQDAHFINQLVDLYKELKASNLTVLELNQLNSAEKQEDLIKIFTEVETILSAGHFDNQSKIAFFAQQIKFGHLDTALQDLTIVIDGFTRFSAEEENLIGLLHEKGVDIIIGTYISQKAYRSTFSNGNVYQASLDFIRGLAGKFQTKPEYVVSKQEALPAFTKLSQLFESCHDFSDSQLVLTDKDKEHVTIWDVINQKEEVEHVAKSIRRKLYEGHRYKDILVLLGDADAYKLQIGKIFDKYEIPYYFGKAESMSSHPLVHFVDSLERVKRYNFRAEDVMNLLKSGLYGKIRQNQLDKLEQYVIYADIKGKTKFFKDFTLDNHGQFDLKALNKLRAEVMSPLQELIKIQAQKGDSILQKLTNFLEAISLTNNFSKLIQGVSDTEQEKNEQVWKTFTVILEQFHTIFGQEKMKLADFLALLRSGMLAADYRTVPASVDVVTVKSYDLVEPHSNKFVFALGMTQSHFPKIVQNKSLISDEERAKINEATPDNRRFDIVTKENLKKNHFTALSLFNAATQELVLTLPQILNEAEDNTSSYLLELQDMGVPVVEKGGNRLAADPEDIGNYKALLSRVIELNRSAIDQELSKEEQTFWSVAVRYLRQKLAKEGLTIPEVNDKMQTKQVAAEVMAARFPIDQPLNLSSSALTTFYNNQYLYFLQYILGLQELETIHPDARNHGTYLHRVFELVMQDQSTDDFDSKLNRAIDITNHEDSFHLVYNEDEESRYALGILEDIARSTATVLKGDNPVQAESEEEAFELMLDQAVKIRGVIDRIDRLSDGSLGIVDYKSSKNTFDLQKFYNGLSPQLVTYIEALRSCKNLNDTDKIFGAMYLHMQEPKTDLANMKSIEKIPETVHKNLSYKGLFLEDEKAHLANGKYHLHDAVYSQKEVDLLLDYNKRLYRSAAKQIRKGNFLINPYSQDGKSVQGEQLKAITHFEADRHMPYARKLYQLPRKEKRQGFLALMQSKKEEEGNDL.

It belongs to the helicase family. AddB/RexB type 2 subfamily. As to quaternary structure, heterodimer of AddA and RexB. The cofactor is Mg(2+).

Its function is as follows. The heterodimer acts as both an ATP-dependent DNA helicase and an ATP-dependent, dual-direction single-stranded exonuclease. Recognizes the chi site generating a DNA molecule suitable for the initiation of homologous recombination. This subunit has 5' -&gt; 3' nuclease activity but not helicase activity. In Streptococcus mutans serotype c (strain ATCC 700610 / UA159), this protein is ATP-dependent helicase/deoxyribonuclease subunit B.